The primary structure comprises 377 residues: tRNA-specific 2-thiouridylase MnmA (377 aa).

ATP is bound by residues 12-19 (GMSGGVDS) and M38. The segment at 98–100 (NPD) is interaction with target base in tRNA. The active-site Nucleophile is the C103. C103 and C200 are oxidised to a cystine. Residue G127 coordinates ATP. Residues 150–152 (KDQ) form an interaction with tRNA region. Residue C200 is the Cysteine persulfide intermediate of the active site. The tract at residues 314–315 (RY) is interaction with tRNA.

The protein belongs to the MnmA/TRMU family.

Its subcellular location is the cytoplasm. The catalysed reaction is S-sulfanyl-L-cysteinyl-[protein] + uridine(34) in tRNA + AH2 + ATP = 2-thiouridine(34) in tRNA + L-cysteinyl-[protein] + A + AMP + diphosphate + H(+). In terms of biological role, catalyzes the 2-thiolation of uridine at the wobble position (U34) of tRNA, leading to the formation of s(2)U34. This chain is tRNA-specific 2-thiouridylase MnmA, found in Limosilactobacillus reuteri (strain DSM 20016) (Lactobacillus reuteri).